Consider the following 94-residue polypeptide: Co-chaperonin GroES (94 aa).

The protein belongs to the GroES chaperonin family. As to quaternary structure, heptamer of 7 subunits arranged in a ring. Interacts with the chaperonin GroEL.

The protein resides in the cytoplasm. In terms of biological role, together with the chaperonin GroEL, plays an essential role in assisting protein folding. The GroEL-GroES system forms a nano-cage that allows encapsulation of the non-native substrate proteins and provides a physical environment optimized to promote and accelerate protein folding. GroES binds to the apical surface of the GroEL ring, thereby capping the opening of the GroEL channel. The chain is Co-chaperonin GroES from Bacillus cereus (strain ATCC 14579 / DSM 31 / CCUG 7414 / JCM 2152 / NBRC 15305 / NCIMB 9373 / NCTC 2599 / NRRL B-3711).